The sequence spans 241 residues: MKKIIFICFSLLLALTGGCSMNDNDKNSTNDNKTEAVKPKDMDPKDLPQVPAFQDEKTREYMVSTKEEEPGYYLLESKLKGFRMLFPEDGKYLSRRSSLTGKNKESIGFNSYDKDTNVMFDGHVTYYKEESFANEPKTMLDIVSGKNDYKGEYKKSSKKKTDIYTAKKKDIFDDIDRKYNYSYSYFGYVKSTEEDNLGVEYAFTLGCKNENQPCSLDEEKAKNKVEKLINSITFLIDKKEK.

The signal sequence occupies residues 1–18 (MKKIIFICFSLLLALTGG). A lipid anchor (N-palmitoyl cysteine) is attached at cysteine 19. A lipid anchor (S-diacylglycerol cysteine) is attached at cysteine 19. The segment at 22–48 (NDNDKNSTNDNKTEAVKPKDMDPKDLP) is disordered. The span at 23–46 (DNDKNSTNDNKTEAVKPKDMDPKD) shows a compositional bias: basic and acidic residues.

The protein resides in the cell membrane. In terms of biological role, required for complex colony architecture. This is Putative lipoprotein YvcA (yvcA) from Bacillus subtilis (strain 168).